Here is a 2605-residue protein sequence, read N- to C-terminus: Protein ABERRANT POLLEN TRANSMISSION 1 (2605 aa).

The signal sequence occupies residues 1–43 (MMLGLVQLLVGFVVAWEAVELVLRHGLLLSVFKLAILAALAAA). Positions 137-158 (STNKKKPAPRKPISTTTAKAKG) are disordered. Asn232, Asn320, Asn348, Asn516, Asn587, Asn628, Asn696, Asn779, Asn1171, Asn1318, and Asn1459 each carry an N-linked (GlcNAc...) asparagine glycan. Residues 305–326 (SASTVAEQKDEPSVDNKSAARS) form a disordered region. A compositionally biased stretch (basic and acidic residues) spans 311 to 326 (EQKDEPSVDNKSAARS). The segment at 1761–1818 (MSKDGALSSVSSTSQPSEPQQIKSSESPPSNGSGKPDLTSSSENALKRSNNSDSEEEG) is disordered. Residues 1768–1781 (SSVSSTSQPSEPQQ) show a composition bias toward low complexity. The span at 1782-1812 (IKSSESPPSNGSGKPDLTSSSENALKRSNNS) shows a compositional bias: polar residues. 5 N-linked (GlcNAc...) asparagine glycosylation sites follow: Asn1791, Asn1810, Asn2003, Asn2280, and Asn2291. Disordered stretches follow at residues 2269–2312 (VSTT…SSFD) and 2332–2361 (EGQTNTQYEPQDAAKDSKLLRPVRSTREDK). The span at 2281–2300 (TSVAETNSPNNQSSKETTFA) shows a compositional bias: polar residues. 2 stretches are compositionally biased toward basic and acidic residues: residues 2303 to 2312 (PELRRTSSFD) and 2343 to 2361 (DAAKDSKLLRPVRSTREDK). Residues Asn2468 and Asn2564 are each glycosylated (N-linked (GlcNAc...) asparagine). Residues 2574 to 2605 (TELEVAELPPRAPGYNTDSSSDSSSAETSPKD) are disordered.

The protein belongs to the SABRE family. Mature pollen-specific.

The protein resides in the secreted. The protein localises to the golgi apparatus. Functionally, may be involved in membrane trafficking. Required for tip growth in pollen tubes and root hairs. This Zea mays (Maize) protein is Protein ABERRANT POLLEN TRANSMISSION 1.